Consider the following 402-residue polypeptide: Putative F-box protein At3g23960 (402 aa).

Residues 1–23 (MRSRQLHNVSEDRETLSRRNKRS) are disordered. The F-box domain maps to 26 to 73 (SLNGHIPIDLLIEIFLKLPVKSIATCRSVSKFWTYVLGRQDFTELFLT).

The protein is Putative F-box protein At3g23960 of Arabidopsis thaliana (Mouse-ear cress).